The primary structure comprises 40 residues: Large ribosomal subunit protein bL36 (40 aa).

Belongs to the bacterial ribosomal protein bL36 family.

The polypeptide is Large ribosomal subunit protein bL36 (Corynebacterium diphtheriae (strain ATCC 700971 / NCTC 13129 / Biotype gravis)).